A 389-amino-acid polypeptide reads, in one-letter code: 26S proteasome regulatory subunit 10B (389 aa).

The residue at position 72 (Lys72) is an N6-acetyllysine. 174 to 181 (GPPGTGKT) lines the ATP pocket. Lys206 carries the post-translational modification N6-acetyllysine. Ser244 is modified (phosphoserine).

Belongs to the AAA ATPase family. In terms of assembly, component of the 19S proteasome regulatory particle complex. The 26S proteasome consists of a 20S core particle (CP) and two 19S regulatory subunits (RP). The regulatory particle is made of a lid composed of 9 subunits, a base containing 6 ATPases including PSMC6 and few additional components. Interacts with PAAF1.

The protein localises to the cytoplasm. The protein resides in the nucleus. In terms of biological role, component of the 26S proteasome, a multiprotein complex involved in the ATP-dependent degradation of ubiquitinated proteins. This complex plays a key role in the maintenance of protein homeostasis by removing misfolded or damaged proteins, which could impair cellular functions, and by removing proteins whose functions are no longer required. Therefore, the proteasome participates in numerous cellular processes, including cell cycle progression, apoptosis, or DNA damage repair. PSMC6 belongs to the heterohexameric ring of AAA (ATPases associated with diverse cellular activities) proteins that unfolds ubiquitinated target proteins that are concurrently translocated into a proteolytic chamber and degraded into peptides. The sequence is that of 26S proteasome regulatory subunit 10B (PSMC6) from Bos taurus (Bovine).